The following is a 422-amino-acid chain: Glutamate-1-semialdehyde 2,1-aminomutase (422 aa).

An N6-(pyridoxal phosphate)lysine modification is found at Lys265.

It belongs to the class-III pyridoxal-phosphate-dependent aminotransferase family. HemL subfamily. Pyridoxal 5'-phosphate is required as a cofactor.

Its subcellular location is the cytoplasm. It carries out the reaction (S)-4-amino-5-oxopentanoate = 5-aminolevulinate. The protein operates within porphyrin-containing compound metabolism; protoporphyrin-IX biosynthesis; 5-aminolevulinate from L-glutamyl-tRNA(Glu): step 2/2. This is Glutamate-1-semialdehyde 2,1-aminomutase from Methanococcoides burtonii (strain DSM 6242 / NBRC 107633 / OCM 468 / ACE-M).